A 137-amino-acid chain; its full sequence is MRHGKVHRKLNRTAEHRKAMFANMCASLIKHEQIVTTLPKAKELRPIVEKLVTLGKKGGLALRRQAIAEMRDVDQVKKLFDVLAPRYKDRNGGYTRIIKAGFRYGDNAAMAVIEFVDRDVDAKGQDSGPVQETSEAA.

This sequence belongs to the bacterial ribosomal protein bL17 family. As to quaternary structure, part of the 50S ribosomal subunit. Contacts protein L32.

This Bradyrhizobium sp. (strain ORS 278) protein is Large ribosomal subunit protein bL17.